The chain runs to 223 residues: Phosphoribosylformylglycinamidine synthase subunit PurQ (223 aa).

A Glutamine amidotransferase type-1 domain is found at 4–223 (FAVVVFPGTN…FKGMVEWVRS (220 aa)). Residue Cys85 is the Nucleophile of the active site. Residues His196 and Glu198 contribute to the active site.

As to quaternary structure, part of the FGAM synthase complex composed of 1 PurL, 1 PurQ and 2 PurS subunits.

The protein localises to the cytoplasm. The enzyme catalyses N(2)-formyl-N(1)-(5-phospho-beta-D-ribosyl)glycinamide + L-glutamine + ATP + H2O = 2-formamido-N(1)-(5-O-phospho-beta-D-ribosyl)acetamidine + L-glutamate + ADP + phosphate + H(+). The catalysed reaction is L-glutamine + H2O = L-glutamate + NH4(+). It participates in purine metabolism; IMP biosynthesis via de novo pathway; 5-amino-1-(5-phospho-D-ribosyl)imidazole from N(2)-formyl-N(1)-(5-phospho-D-ribosyl)glycinamide: step 1/2. Functionally, part of the phosphoribosylformylglycinamidine synthase complex involved in the purines biosynthetic pathway. Catalyzes the ATP-dependent conversion of formylglycinamide ribonucleotide (FGAR) and glutamine to yield formylglycinamidine ribonucleotide (FGAM) and glutamate. The FGAM synthase complex is composed of three subunits. PurQ produces an ammonia molecule by converting glutamine to glutamate. PurL transfers the ammonia molecule to FGAR to form FGAM in an ATP-dependent manner. PurS interacts with PurQ and PurL and is thought to assist in the transfer of the ammonia molecule from PurQ to PurL. This chain is Phosphoribosylformylglycinamidine synthase subunit PurQ, found in Pyrococcus furiosus (strain ATCC 43587 / DSM 3638 / JCM 8422 / Vc1).